The following is a 427-amino-acid chain: MALLKSRLLVGVARCQPCLAAVQGRASSWWSHVEMGPPDPILGVTEAFKRDTNSKKMNLGVGAYRDDNGKPYVLSSVRKAEAQLASKNLDKEYLPIGGLAEFARASAQLALGENCDAIQSGRFITVQTISGTGSLRVGANFLQRFYKYSRDVYLPKPSWGNHTPIFRDAGLEVKGYRYYDPKTCGFDFTGALDDISKIPEQSIILFHACAHNPTGVDPKQEQWKELAALIKSRRLFPFFDMAYQGFASGDTNRDAWAVRHFIQEGINVVLSQSYAKNMGLYGERVGAFTVVCSDAEEAKRVESQLKILIRPMYSNPPLNGARIAAAILTQPDLRKEWLQEVKGMANRIISMREQLVSNLKKEGSIHNWQHISDQIGMFCFTGLRPEQVERLIKEFSIYMTKDGRISVAGVTSANNGYLAHAIHQVTK.

A mitochondrion-targeting transit peptide spans M1 to A26. Substrate-binding residues include G62, W159, and N212. An N6-(pyridoxal phosphate)lysine modification is found at K276. R404 contributes to the substrate binding site.

It belongs to the class-I pyridoxal-phosphate-dependent aminotransferase family. Homodimer. Pyridoxal 5'-phosphate serves as cofactor.

It is found in the mitochondrion matrix. The enzyme catalyses L-aspartate + 2-oxoglutarate = oxaloacetate + L-glutamate. It carries out the reaction L-kynurenine + 2-oxoglutarate = kynurenate + L-glutamate + H2O. Catalyzes the irreversible transamination of the L-tryptophan metabolite L-kynurenine to form kynurenic acid (KA). As a member of the malate-aspartate shuttle, it has a key role in the intracellular NAD(H) redox balance. Is important for metabolite exchange between mitochondria and cytosol, and for amino acid metabolism. The protein is Aspartate aminotransferase, mitochondrial (got2) of Xenopus tropicalis (Western clawed frog).